We begin with the raw amino-acid sequence, 353 residues long: MSEPLKPRIDFAEPLKEEPTSAFKAQQTFSEAESRTFAPAAIDERPEDEGVAEAAVDAALRPKRSLWRKMVMGGLALFGASVVGQGVQWTMNAWQTQDWVALGGCAAGALIIGAGVGSVVTEWRRLWRLRQRAHERDEARELLHSHSVGKGRAFCEKLAQQAGIDQSHPALQRWYAAIHETQNDREIVGLYAHLVQPVLDAQARREISRFAAESTLMIAVSSLALVDMAFIAWRNLRLINRIATLYGIELGYYSRLRLFRLVLLNIAFAGASELVREVGMDWMSQDLAARLSTRAAQGIGAGLLTARLGIKAMELCRPLPWIDNDKPRLGDFRRQLIGQLKETLQKSKSSPEK.

Residues 1–19 show a composition bias toward basic and acidic residues; the sequence is MSEPLKPRIDFAEPLKEEP. The interval 1 to 35 is disordered; it reads MSEPLKPRIDFAEPLKEEPTSAFKAQQTFSEAESR. Helical transmembrane passes span 70-90, 100-120, and 213-233; these read MVMG…VQWT, VALG…GSVV, and ESTL…FIAW.

Belongs to the UPF0283 family.

The protein localises to the cell inner membrane. This chain is UPF0283 membrane protein YcjF, found in Salmonella enteritidis PT4 (strain P125109).